A 343-amino-acid chain; its full sequence is MGSPGASLGIKKALQSEQATALPASAPAVSQPTAPAPSCLPKAGQVIPTLLREAPFSSVIAPTLLCGFLFLAWVAAEVPEESSRMAGSGARSEEGRRQHAFVPEPFDGANVVPNLWLHSFEVINDLNHWDHITKLRFLKESLRGEALGVYNRLSPQDQGDYGTVKEALLKAFGVPGAAPSHLPKEIVFANSMGKGYYLKGKIGKVPVRFLVDSGAQVSVVHPNLWEEVTDGDLDTLQPFENVVKVANGAEMKILGVWDTAVSLGKLKLKAQFLVANASAEEAIIGTDVLQDHNAILDFEHRTCTLKGKKFRLLPVGGSLEDEFDLELIEEDPSSEEGRQELSH.

Over 1–55 (MGSPGASLGIKKALQSEQATALPASAPAVSQPTAPAPSCLPKAGQVIPTLLREAP) the chain is Cytoplasmic. Positions 1-190 (MGSPGASLGI…HLPKEIVFAN (190 aa)) are excised as a propeptide. Residues 56 to 76 (FSSVIAPTLLCGFLFLAWVAA) form a helical membrane-spanning segment. Residues 77–343 (EVPEESSRMA…SEEGRQELSH (267 aa)) are Extracellular-facing. The Peptidase A2 domain maps to 207–288 (VRFLVDSGAQ…AEEAIIGTDV (82 aa)). Residue aspartate 212 is part of the active site. N-linked (GlcNAc...) asparagine glycosylation occurs at asparagine 276. The propeptide occupies 327-343 (LIEEDPSSEEGRQELSH).

Homodimer. Post-translationally, undergoes autocleavage which is necessary for activation of the protein. Expressed primarily in the granular layer of the epidermis and inner root sheath of hair follicles. In psoriatic skin, expressed throughout the stratum corneum. In ulcerated skin, expressed in the stratum granulosum of intact epidermis but almost absent from ulcerated regions. Expressed in differentiated areas of squamous cell carcinomas but not in undifferentiated tumors.

The protein resides in the membrane. In terms of biological role, protease responsible for filaggrin processing, essential for the maintenance of a proper epidermis organization. In Homo sapiens (Human), this protein is Retroviral-like aspartic protease 1.